A 175-amino-acid chain; its full sequence is DDB1- and CUL4-associated factor 16 (175 aa).

Residues 1 to 42 (MGPRNPSPDPLSESESEEEENTNYLNESSGEEWDSSEEEDPV) form a disordered region. Acidic residues-rich tracts occupy residues 12 to 21 (SESESEEEEN) and 29 to 41 (SGEE…EEDP). K61 carries the N6-acetyllysine modification.

In terms of assembly, interacts with DDB1 and CUL4A.

Its subcellular location is the nucleus. Its pathway is protein modification; protein ubiquitination. Its function is as follows. Functions as a substrate recognition component for CUL4-DDB1 E3 ubiquitin-protein ligase complex, which mediates ubiquitination and proteasome-dependent degradation of nuclear proteins. In Bos taurus (Bovine), this protein is DDB1- and CUL4-associated factor 16 (DCAF16).